A 294-amino-acid polypeptide reads, in one-letter code: uncharacterized protein (294 aa).

The helical transmembrane segment at Ile-5 to Phe-25 threads the bilayer. Residues Asn-151, Asn-170, Asn-205, and Asn-271 are each glycosylated (N-linked (GlcNAc...) asparagine; by host).

The protein localises to the membrane. This is an uncharacterized protein from Acanthamoeba polyphaga (Amoeba).